Consider the following 368-residue polypeptide: Phospho-N-acetylmuramoyl-pentapeptide-transferase (368 aa).

Helical transmembrane passes span 34–54 (GAVV…IDHL), 79–99 (TPTM…VLWA), 102–122 (LNPY…VGFY), 140–160 (ARIL…VRLG), 176–196 (LVIK…VGAG), 207–227 (GLAI…AYLA), 247–267 (LAVL…FNAP), 271–291 (IFMG…IAVA), 296–316 (IVLA…IVQV), and 345–365 (QIVI…LSTL).

This sequence belongs to the glycosyltransferase 4 family. MraY subfamily. Mg(2+) serves as cofactor.

The protein localises to the cell inner membrane. It carries out the reaction UDP-N-acetyl-alpha-D-muramoyl-L-alanyl-gamma-D-glutamyl-meso-2,6-diaminopimeloyl-D-alanyl-D-alanine + di-trans,octa-cis-undecaprenyl phosphate = di-trans,octa-cis-undecaprenyl diphospho-N-acetyl-alpha-D-muramoyl-L-alanyl-D-glutamyl-meso-2,6-diaminopimeloyl-D-alanyl-D-alanine + UMP. The protein operates within cell wall biogenesis; peptidoglycan biosynthesis. Catalyzes the initial step of the lipid cycle reactions in the biosynthesis of the cell wall peptidoglycan: transfers peptidoglycan precursor phospho-MurNAc-pentapeptide from UDP-MurNAc-pentapeptide onto the lipid carrier undecaprenyl phosphate, yielding undecaprenyl-pyrophosphoryl-MurNAc-pentapeptide, known as lipid I. In Bradyrhizobium sp. (strain BTAi1 / ATCC BAA-1182), this protein is Phospho-N-acetylmuramoyl-pentapeptide-transferase.